Here is a 119-residue protein sequence, read N- to C-terminus: Putative phosphoethanolamine transferase YjgX (119 aa).

The next 2 helical transmembrane spans lie at 5–25 (VFPVYHFLVSAAILVFVVIFW) and 94–114 (LLLSLVRVCAGIICQCMTIPY).

Belongs to the phosphoethanolamine transferase family.

Its subcellular location is the cell inner membrane. In Escherichia coli (strain K12), this protein is Putative phosphoethanolamine transferase YjgX (yjgX).